The chain runs to 513 residues: ATP synthase subunit alpha (513 aa).

169–176 is an ATP binding site; the sequence is GDRQTGKT.

Belongs to the ATPase alpha/beta chains family. As to quaternary structure, F-type ATPases have 2 components, CF(1) - the catalytic core - and CF(0) - the membrane proton channel. CF(1) has five subunits: alpha(3), beta(3), gamma(1), delta(1), epsilon(1). CF(0) has three main subunits: a(1), b(2) and c(9-12). The alpha and beta chains form an alternating ring which encloses part of the gamma chain. CF(1) is attached to CF(0) by a central stalk formed by the gamma and epsilon chains, while a peripheral stalk is formed by the delta and b chains.

The protein resides in the cell inner membrane. It catalyses the reaction ATP + H2O + 4 H(+)(in) = ADP + phosphate + 5 H(+)(out). In terms of biological role, produces ATP from ADP in the presence of a proton gradient across the membrane. The alpha chain is a regulatory subunit. The sequence is that of ATP synthase subunit alpha from Thioalkalivibrio sulfidiphilus (strain HL-EbGR7).